Here is a 90-residue protein sequence, read N- to C-terminus: Heat shock protein beta-7 (90 aa).

A sHSP domain is found at 39–90; it reads PLTFPARPGGQGNIKTLGDAYEFTVDMRDFSPEDIIVTTSNNHIEVRAEKKP.

It belongs to the small heat shock protein (HSP20) family. In terms of assembly, interacts with C-terminal domain of actin-binding protein 280. Found in both cardiac and skeletal muscle.

The protein localises to the cytoplasm. It localises to the nucleus. Its subcellular location is the cajal body. This Rattus norvegicus (Rat) protein is Heat shock protein beta-7 (Hspb7).